Reading from the N-terminus, the 206-residue chain is Large ribosomal subunit protein uL4 (206 aa).

The tract at residues 48 to 97 is disordered; the sequence is THAVKNRSLVSGGGKKPWKQKHTGRARQGSTRASQWVGGGKAMGPKPRDY. Residues 63–72 are compositionally biased toward basic residues; it reads KPWKQKHTGR.

It belongs to the universal ribosomal protein uL4 family. In terms of assembly, part of the 50S ribosomal subunit.

Its function is as follows. One of the primary rRNA binding proteins, this protein initially binds near the 5'-end of the 23S rRNA. It is important during the early stages of 50S assembly. It makes multiple contacts with different domains of the 23S rRNA in the assembled 50S subunit and ribosome. In terms of biological role, forms part of the polypeptide exit tunnel. The sequence is that of Large ribosomal subunit protein uL4 from Anaeromyxobacter dehalogenans (strain 2CP-1 / ATCC BAA-258).